The primary structure comprises 282 residues: HMG box-containing protein R545 (282 aa).

Residues 1–282 (MPKKTATKAN…KKEASDEESD (282 aa)) are disordered. A compositionally biased stretch (acidic residues) spans 16-29 (DSENDSVVSEEEDN). The span at 70 to 87 (KGKVNAKKAPAKKAPVKK) shows a compositional bias: basic residues. Positions 93–121 (DSDNEEDEASEDGSDDEEDVVSADDSDSD) are enriched in acidic residues. Basic residues predominate over residues 127 to 153 (KAAKKAPAKKAPAKKAPAKKAPAKKGK). 2 stretches are compositionally biased toward basic and acidic residues: residues 176–187 (TKKDGDKPKKPL) and 197–214 (RMPE…KEYM). The HMG box DNA-binding region spans 183 to 252 (PKKPLSDYQK…KAPAKGGSKS (70 aa)). Residues 253–273 (TAKKAPAKKAPAKKAPAKKSK) are compositionally biased toward basic residues.

The chain is HMG box-containing protein R545 from Acanthamoeba polyphaga mimivirus (APMV).